Here is a 252-residue protein sequence, read N- to C-terminus: Chitooligosaccharide deacetylase (252 aa).

Mg(2+) is bound by residues His-61 and His-125.

The protein belongs to the YdjC deacetylase family. ChbG subfamily. As to quaternary structure, homodimer. Requires Mg(2+) as cofactor.

It is found in the cytoplasm. The enzyme catalyses N,N'-diacetylchitobiose + H2O = N-acetyl-beta-D-glucosaminyl-(1-&gt;4)-D-glucosamine + acetate. It catalyses the reaction diacetylchitobiose-6'-phosphate + H2O = N'-monoacetylchitobiose-6'-phosphate + acetate. It participates in glycan degradation; chitin degradation. Involved in the degradation of chitin. ChbG is essential for growth on the acetylated chitooligosaccharides chitobiose and chitotriose but is dispensable for growth on cellobiose and chitosan dimer, the deacetylated form of chitobiose. Deacetylation of chitobiose-6-P and chitotriose-6-P is necessary for both the activation of the chb promoter by the regulatory protein ChbR and the hydrolysis of phosphorylated beta-glucosides by the phospho-beta-glucosidase ChbF. Catalyzes the removal of only one acetyl group from chitobiose-6-P to yield monoacetylchitobiose-6-P, the inducer of ChbR and the substrate of ChbF. In Shigella flexneri serotype 5b (strain 8401), this protein is Chitooligosaccharide deacetylase.